The primary structure comprises 409 residues: Inner membrane transport protein YqeG (409 aa).

Topologically, residues 1-25 are periplasmic; sequence MSNIWSKEETLWSFALYGTAVGAGT. Residues 26–46 form a helical membrane-spanning segment; that stretch reads LFLPIQLGSAGAVVLFITALV. At 47–87 the chain is on the cytoplasmic side; that stretch reads AWPLTYWPHKALCQFILSSKTSAGEGITGAVTHYYGKKIGN. Residues 88–108 traverse the membrane as a helical segment; it reads LITTLYFIAFFVVVLIYAVAI. Over 109–127 the chain is Periplasmic; the sequence is TNSLTEQLAKHMVIDLRIR. The chain crosses the membrane as a helical span at residues 128–148; that stretch reads MLVSLGVVLILNLIFLMGRHA. Over 149–151 the chain is Cytoplasmic; that stretch reads TIR. The chain crosses the membrane as a helical span at residues 152-172; it reads VMGFLVFPLIAYFLFLSIYLV. Residues 173–193 lie on the Periplasmic side of the membrane; it reads GSWQPDLLTTQVEFNQNTLHQ. The helical transmembrane segment at 194–214 threads the bilayer; the sequence is IWISIPVMVFAFSHTPIISTF. Residues 215-235 lie on the Cytoplasmic side of the membrane; that stretch reads AIDRREKYGEHAMDKCKKIMK. The chain crosses the membrane as a helical span at residues 236 to 256; sequence VAYLIICISVLFFVFSCLLSI. Over 257–276 the chain is Periplasmic; it reads PPSYIEAAKEEGVTILSALS. Residues 277-297 traverse the membrane as a helical segment; that stretch reads MLPNAPAWLSISGIIVAVVAM. The Cytoplasmic segment spans residues 298 to 329; that stretch reads SKSFLGTYFGVIEGATEVVKTTLQQVGVKKSR. The chain crosses the membrane as a helical span at residues 330 to 350; sequence AFNRALSIMLVSLITFIVCCI. At 351–353 the chain is on the periplasmic side; the sequence is NPN. The chain crosses the membrane as a helical span at residues 354–374; sequence AISMIYAISGPLIAMILFIMP. At 375-388 the chain is on the cytoplasmic side; sequence TLSTYLIPALKPWR. Residues 389-409 traverse the membrane as a helical segment; it reads SIGNLITLIVGILCVSVMFFS.

Belongs to the amino acid/polyamine transporter 2 family. SdaC/TdcC subfamily.

It localises to the cell inner membrane. The polypeptide is Inner membrane transport protein YqeG (yqeG) (Escherichia coli O6:H1 (strain CFT073 / ATCC 700928 / UPEC)).